A 300-amino-acid chain; its full sequence is MDWFHCNQCFRKDGAHFFVTSCGHIFCKKCVTLEKCAVCGTACKHLALSDNLKPQEKMFFKSPVETALQYFSHISQVWSFQKKQTDLLIAFYKHRITKLETAMQETQQALVSQDKELSVLRKENGELKKFLAILKESPSRYQGSRSITPRPVAITSPSQSVTPRPSFQHSSQVVSRSSSVESVPYREAGFGSLGQGGRGLQGRRTPRDSYNETPSPASTHSLSYRPSSASSGQGIFSFRPSPNGHSGHTRVLTPNNLAQRESRTTLESLPSFQLPVLQTPYQQQRQMGLPSGREAWTTSR.

An RING-type zinc finger spans residues 6 to 40 (CNQCFRKDGAHFFVTSCGHIFCKKCVTLEKCAVCG). Positions 88-124 (LIAFYKHRITKLETAMQETQQALVSQDKELSVLRKEN) form a coiled coil. 2 disordered regions span residues 141 to 251 (YQGS…HTRV) and 280 to 300 (PYQQQRQMGLPSGREAWTTSR). A compositionally biased stretch (polar residues) spans 155-169 (TSPSQSVTPRPSFQH). Low complexity predominate over residues 170–183 (SSQVVSRSSSVESV). A compositionally biased stretch (gly residues) spans 191–200 (GSLGQGGRGL). The segment covering 211–234 (NETPSPASTHSLSYRPSSASSGQG) has biased composition (polar residues).

In terms of assembly, homodimer. Autoubiquitinated.

The protein localises to the chromosome. It carries out the reaction S-ubiquitinyl-[E2 ubiquitin-conjugating enzyme]-L-cysteine + [acceptor protein]-L-lysine = [E2 ubiquitin-conjugating enzyme]-L-cysteine + N(6)-ubiquitinyl-[acceptor protein]-L-lysine.. It participates in protein modification; protein ubiquitination. In terms of biological role, ubiquitin E3 ligase that acts as a crucial factor for crossing-over (CO) formation during meiosis. Essential for normal prophase I progression and for ensuring appropriate CO designation in meiosis. Recruits key components of the cross-over machinery either directly ou indirectly, leading to the activation of the MutL-gamma complex. The function of RNF212B in CO designation is dependent on its catalytic activity. The polypeptide is E3 ubiquitin-protein ligase RNF212B (RNF212B) (Pongo abelii (Sumatran orangutan)).